The primary structure comprises 493 residues: Mitochondrial distribution and morphology protein 10 (493 aa).

This sequence belongs to the MDM10 family. As to quaternary structure, component of the ER-mitochondria encounter structure (ERMES) or MDM complex, composed of MMM1, MDM10, MDM12 and MDM34. Associates with the mitochondrial outer membrane sorting assembly machinery SAM(core) complex, which consists of SAM35, SAM37 and SAM50, to form a SAM(holo) complex.

Its subcellular location is the mitochondrion outer membrane. Functionally, component of the ERMES/MDM complex, which serves as a molecular tether to connect the endoplasmic reticulum and mitochondria. Components of this complex are involved in the control of mitochondrial shape and protein biogenesis and may function in phospholipid exchange. MDM10 is involved in the late assembly steps of the general translocase of the mitochondrial outer membrane (TOM complex). Functions in the TOM40-specific route of the assembly of outer membrane beta-barrel proteins, including the association of TOM40 with the receptor TOM22 and small TOM proteins. Can associate with the SAM(core) complex as well as the MDM12-MMM1 complex, both involved in late steps of the major beta-barrel assembly pathway, that is responsible for biogenesis of all outer membrane beta-barrel proteins. May act as a switch that shuttles between both complexes and channels precursor proteins into the TOM40-specific pathway. Plays a role in mitochondrial morphology and in the inheritance of mitochondria. In Saccharomyces cerevisiae (strain RM11-1a) (Baker's yeast), this protein is Mitochondrial distribution and morphology protein 10.